Consider the following 450-residue polypeptide: MSLSSLEHKLTYHVRNWLHGSGFAWNTLHMSAFLVALCACIPAGFISQISLYSEPWREHLGYSVVEVNVLFSAVNLGGYITPPLLGLLSDAHGPVMLSWLSFVGFVPTYAYAAWVFASGEPHFYASVLCFTLIGISTNALYFSALFTASKLYPASKLCSISLPATFYGMASVLGSQLLKIPWFRNGLPYLDLSRVFRTLAVAYTLISFCMWFATSIVTMLKVKAATLTFAGMQSPTEPLLPQDIRRRLRNFFHDPAAYFMALVLLLSLGPMEMFLTNMGSLSSLLGQASVLPEFAIASTCSRFLSGLIIDLCIHNGVSTMSVQWAVLLLGVVGQWIVVLATRASDGPLLSLASALSGACYGGLFTVSPILTLAVWGDAVFGTAYGSFMITPAVGSILFGLTYAHIFDANCTPSGVLPVCIQHVFWSSTSALAIALLFSVLMYLVFWRRKV.

Helical transmembrane passes span 32–52 (AFLVALCACIPAGFISQISLY), 69–89 (VLFSAVNLGGYITPPLLGLLS), 96–116 (MLSWLSFVGFVPTYAYAAWVF), 127–147 (VLCFTLIGISTNALYFSALFT), 157–177 (LCSISLPATFYGMASVLGSQL), 199–219 (LAVAYTLISFCMWFATSIVTM), 255–275 (PAAYFMALVLLLSLGPMEMFL), 290–309 (VLPEFAIASTCSRFLSGLII), 320–340 (MSVQWAVLLLGVVGQWIVVLA), 355–375 (LSGACYGGLFTVSPILTLAVW), 378–398 (AVFGTAYGSFMITPAVGSILF), and 423–443 (VFWSSTSALAIALLFSVLMYL).

Belongs to the major facilitator superfamily.

The protein resides in the vacuole membrane. In terms of biological role, probable transporter. This Eremothecium gossypii (strain ATCC 10895 / CBS 109.51 / FGSC 9923 / NRRL Y-1056) (Yeast) protein is Probable transporter MCH1 (MCH1).